A 211-amino-acid chain; its full sequence is Troponin I, cardiac muscle (211 aa).

Ala1 is subject to N-acetylalanine. The disordered stretch occupies residues 1 to 43 (ADESRDAAGEARPAPAPVRRRSSANYRAYATEPHAKSKKKISA). At Ser4 the chain carries Phosphoserine. Ser22 carries the phosphoserine; by PHK, PKA and PKD/PRKD1 modification. Position 23 is a phosphoserine; by PKA and PKD/PRKD1 (Ser23). Tyr26 bears the Phosphotyrosine mark. At Thr31 the chain carries Phosphothreonine; by STK4/MST1. Residues 32 to 79 (EPHAKSKKKISASRKLQLKTLMLQIAKQELEREAEERRGEKGRALSTR) form an involved in binding TNC region. Phosphoserine; by PKC/PRKCE is present on residues Ser42 and Ser44. The residue at position 51 (Thr51) is a Phosphothreonine; by STK4/MST1. Ser77 carries the post-translational modification Phosphoserine. Thr78 is modified (phosphothreonine). Phosphothreonine; by STK4/MST1 occurs at positions 129 and 143. The segment at 129–150 (TQKIFDLRGKFKRPTLRLRVRI) is involved in binding TNC and actin. Ser151 carries the phosphoserine; by PAK3 modification. The residue at position 182 (Thr182) is a Phosphothreonine. Ser200 is modified (phosphoserine).

The protein belongs to the troponin I family. As to quaternary structure, interacts with TRIM63. Binds to actin and tropomyosin. Interacts with STK4/MST1. Post-translationally, phosphorylated at Ser-22 and Ser-23 by PRKD1; phosphorylation reduces myofilament calcium sensitivity. Phosphorylated preferentially at Thr-31. Phosphorylation by STK4/MST1 alters its binding affinity to TNNC1 (cardiac Tn-C) and TNNT2 (cardiac Tn-T). Phosphorylated at Ser-42 and Ser-44 by PRKCE; phosphorylation increases myocardium contractile dysfunction. Ser-22 is one of three sites in the region of residues 1-48 that are phosphorylated by phosphorylase kinase.

Functionally, troponin I is the inhibitory subunit of troponin, the thin filament regulatory complex which confers calcium-sensitivity to striated muscle actomyosin ATPase activity. In Oryctolagus cuniculus (Rabbit), this protein is Troponin I, cardiac muscle (TNNI3).